We begin with the raw amino-acid sequence, 265 residues long: Urease accessory protein UreH (265 aa).

This sequence belongs to the UreD family. In terms of assembly, ureH, UreF and UreG form a complex that acts as a GTP-hydrolysis-dependent molecular chaperone, activating the urease apoprotein by helping to assemble the nickel containing metallocenter of UreC. The UreE protein probably delivers the nickel.

The protein localises to the cytoplasm. Its function is as follows. Required for maturation of urease via the functional incorporation of the urease nickel metallocenter. This chain is Urease accessory protein UreH, found in Helicobacter pylori (strain P12).